The following is an 84-amino-acid chain: Small ribosomal subunit protein bS20 (84 aa).

Belongs to the bacterial ribosomal protein bS20 family.

In terms of biological role, binds directly to 16S ribosomal RNA. The protein is Small ribosomal subunit protein bS20 of Limosilactobacillus reuteri (strain DSM 20016) (Lactobacillus reuteri).